The following is a 503-amino-acid chain: Probable cytosol aminopeptidase (503 aa).

The Mn(2+) site is built by lysine 274 and aspartate 279. Lysine 286 is a catalytic residue. 3 residues coordinate Mn(2+): aspartate 297, aspartate 356, and glutamate 358. Residue arginine 360 is part of the active site.

Belongs to the peptidase M17 family. The cofactor is Mn(2+).

Its subcellular location is the cytoplasm. It catalyses the reaction Release of an N-terminal amino acid, Xaa-|-Yaa-, in which Xaa is preferably Leu, but may be other amino acids including Pro although not Arg or Lys, and Yaa may be Pro. Amino acid amides and methyl esters are also readily hydrolyzed, but rates on arylamides are exceedingly low.. It carries out the reaction Release of an N-terminal amino acid, preferentially leucine, but not glutamic or aspartic acids.. Its function is as follows. Presumably involved in the processing and regular turnover of intracellular proteins. Catalyzes the removal of unsubstituted N-terminal amino acids from various peptides. The sequence is that of Probable cytosol aminopeptidase from Burkholderia ambifaria (strain ATCC BAA-244 / DSM 16087 / CCUG 44356 / LMG 19182 / AMMD) (Burkholderia cepacia (strain AMMD)).